We begin with the raw amino-acid sequence, 429 residues long: Trigger factor (429 aa).

One can recognise a PPIase FKBP-type domain in the interval 162-247 (DDTVDLAFEG…INAIKKLRQP (86 aa)).

This sequence belongs to the FKBP-type PPIase family. Tig subfamily.

Its subcellular location is the cytoplasm. It catalyses the reaction [protein]-peptidylproline (omega=180) = [protein]-peptidylproline (omega=0). Functionally, involved in protein export. Acts as a chaperone by maintaining the newly synthesized protein in an open conformation. Functions as a peptidyl-prolyl cis-trans isomerase. The chain is Trigger factor from Fusobacterium nucleatum subsp. nucleatum (strain ATCC 25586 / DSM 15643 / BCRC 10681 / CIP 101130 / JCM 8532 / KCTC 2640 / LMG 13131 / VPI 4355).